Here is a 1058-residue protein sequence, read N- to C-terminus: Carbamoyl phosphate synthase large chain (1058 aa).

Residues 1–401 (MPKRTDIQKI…SLLKACRSLE (401 aa)) form a carboxyphosphate synthetic domain region. The ATP site is built by arginine 129, arginine 169, glycine 175, glycine 176, arginine 208, isoleucine 210, glutamate 215, glycine 241, isoleucine 242, histidine 243, glutamine 284, and glutamate 298. The 195-residue stretch at 133–327 (KQLMEELEQP…IAKLAAKIAV (195 aa)) folds into the ATP-grasp 1 domain. 3 residues coordinate Mg(2+): glutamine 284, glutamate 298, and asparagine 300. Mn(2+)-binding residues include glutamine 284, glutamate 298, and asparagine 300. Residues 402–546 (IGVHHNEIPE…YSTYGWENES (145 aa)) form an oligomerization domain region. The interval 547–929 (IRSDKESVLV…ALYKAFEASY (383 aa)) is carbamoyl phosphate synthetic domain. The ATP-grasp 2 domain maps to 671–861 (EQALKELDIP…MAQVATKLIL (191 aa)). ATP is bound by residues arginine 707, serine 746, isoleucine 748, glutamate 752, glycine 777, valine 778, histidine 779, serine 780, glutamine 820, and glutamate 832. Residues glutamine 820, glutamate 832, and asparagine 834 each coordinate Mg(2+). The Mn(2+) site is built by glutamine 820, glutamate 832, and asparagine 834. One can recognise an MGS-like domain in the interval 930–1058 (LHLPTFGNVV…ESRSFVTEAI (129 aa)). Residues 930–1058 (LHLPTFGNVV…ESRSFVTEAI (129 aa)) are allosteric domain.

This sequence belongs to the CarB family. Composed of two chains; the small (or glutamine) chain promotes the hydrolysis of glutamine to ammonia, which is used by the large (or ammonia) chain to synthesize carbamoyl phosphate. Tetramer of heterodimers (alpha,beta)4. Requires Mg(2+) as cofactor. The cofactor is Mn(2+).

The enzyme catalyses hydrogencarbonate + L-glutamine + 2 ATP + H2O = carbamoyl phosphate + L-glutamate + 2 ADP + phosphate + 2 H(+). The catalysed reaction is hydrogencarbonate + NH4(+) + 2 ATP = carbamoyl phosphate + 2 ADP + phosphate + 2 H(+). It functions in the pathway amino-acid biosynthesis; L-arginine biosynthesis; carbamoyl phosphate from bicarbonate: step 1/1. The protein operates within pyrimidine metabolism; UMP biosynthesis via de novo pathway; (S)-dihydroorotate from bicarbonate: step 1/3. In terms of biological role, large subunit of the glutamine-dependent carbamoyl phosphate synthetase (CPSase). CPSase catalyzes the formation of carbamoyl phosphate from the ammonia moiety of glutamine, carbonate, and phosphate donated by ATP, constituting the first step of 2 biosynthetic pathways, one leading to arginine and/or urea and the other to pyrimidine nucleotides. The large subunit (synthetase) binds the substrates ammonia (free or transferred from glutamine from the small subunit), hydrogencarbonate and ATP and carries out an ATP-coupled ligase reaction, activating hydrogencarbonate by forming carboxy phosphate which reacts with ammonia to form carbamoyl phosphate. This is Carbamoyl phosphate synthase large chain from Streptococcus pneumoniae serotype 2 (strain D39 / NCTC 7466).